We begin with the raw amino-acid sequence, 295 residues long: MNLVEWIVTIIMMTEFLLGNCANVFITIVNFIDCVKRRKISSADRIITAIAIFRIGLLWAMLTNWHSHVFTPDTDNLQMRVFGGITWAITNHFTTWLGTILSMFYLFKIANFSNSLFLHLKRKLDNVLLVIFLGSSLFLVAYLGMVNIKKIAWMSIHEGNVTTKSKLKHVTSITNMLLFSLINIVPFGISLNCVLLLIYSLSKHLKNMKFYGKGCQDQSTMVHIKALQTVVSFLLLYATYSSCVIISGWSLQNAPVFLFCVTIGSFYPAGHSCILIWGNQKLKQVFLLLLRQMRC.

Residues 1 to 5 (MNLVE) are Extracellular-facing. The helical transmembrane segment at 6 to 26 (WIVTIIMMTEFLLGNCANVFI) threads the bilayer. At 27–45 (TIVNFIDCVKRRKISSADR) the chain is on the cytoplasmic side. The chain crosses the membrane as a helical span at residues 46-66 (IITAIAIFRIGLLWAMLTNWH). Over 67–80 (SHVFTPDTDNLQMR) the chain is Extracellular. A helical transmembrane segment spans residues 81-101 (VFGGITWAITNHFTTWLGTIL). The Cytoplasmic segment spans residues 102–127 (SMFYLFKIANFSNSLFLHLKRKLDNV). A helical membrane pass occupies residues 128–148 (LLVIFLGSSLFLVAYLGMVNI). At 149–177 (KKIAWMSIHEGNVTTKSKLKHVTSITNML) the chain is on the extracellular side. A glycan (N-linked (GlcNAc...) asparagine) is linked at Asn160. The helical transmembrane segment at 178-198 (LFSLINIVPFGISLNCVLLLI) threads the bilayer. Topologically, residues 199–228 (YSLSKHLKNMKFYGKGCQDQSTMVHIKALQ) are cytoplasmic. A helical transmembrane segment spans residues 229 to 249 (TVVSFLLLYATYSSCVIISGW). Residues 250 to 255 (SLQNAP) lie on the Extracellular side of the membrane. The chain crosses the membrane as a helical span at residues 256 to 276 (VFLFCVTIGSFYPAGHSCILI). Topologically, residues 277-295 (WGNQKLKQVFLLLLRQMRC) are cytoplasmic.

Belongs to the G-protein coupled receptor T2R family.

Its subcellular location is the membrane. Functionally, putative taste receptor which may play a role in the perception of bitterness. The protein is Taste receptor type 2 member 120 of Mus musculus (Mouse).